We begin with the raw amino-acid sequence, 153 residues long: FAD synthase (153 aa).

ATP contacts are provided by residues 9–10, 14–17, Asn92, and Tyr119; these read TF and HPGH.

Belongs to the archaeal FAD synthase family. As to quaternary structure, homodimer. A divalent metal cation serves as cofactor.

The enzyme catalyses FMN + ATP + H(+) = FAD + diphosphate. Its pathway is cofactor biosynthesis; FAD biosynthesis; FAD from FMN: step 1/1. Functionally, catalyzes the transfer of the AMP portion of ATP to flavin mononucleotide (FMN) to produce flavin adenine dinucleotide (FAD) coenzyme. The protein is FAD synthase of Methanosphaerula palustris (strain ATCC BAA-1556 / DSM 19958 / E1-9c).